Reading from the N-terminus, the 239-residue chain is Phosphoribosylaminoimidazole-succinocarboxamide synthase (239 aa).

Belongs to the SAICAR synthetase family.

The enzyme catalyses 5-amino-1-(5-phospho-D-ribosyl)imidazole-4-carboxylate + L-aspartate + ATP = (2S)-2-[5-amino-1-(5-phospho-beta-D-ribosyl)imidazole-4-carboxamido]succinate + ADP + phosphate + 2 H(+). Its pathway is purine metabolism; IMP biosynthesis via de novo pathway; 5-amino-1-(5-phospho-D-ribosyl)imidazole-4-carboxamide from 5-amino-1-(5-phospho-D-ribosyl)imidazole-4-carboxylate: step 1/2. The protein is Phosphoribosylaminoimidazole-succinocarboxamide synthase of Bacillus cereus (strain AH187).